The sequence spans 683 residues: DNA ligase (683 aa).

Residues 35–39 (DADYD), 84–85 (SL), and Glu-115 each bind NAD(+). Lys-117 (N6-AMP-lysine intermediate) is an active-site residue. Arg-138, Glu-175, Lys-293, and Lys-317 together coordinate NAD(+). The Zn(2+) site is built by Cys-411, Cys-414, Cys-429, and Cys-435. The BRCT domain occupies 598 to 683 (QTNSAVSGKT…LQNISTGAQQ (86 aa)).

This sequence belongs to the NAD-dependent DNA ligase family. LigA subfamily. It depends on Mg(2+) as a cofactor. Mn(2+) serves as cofactor.

It carries out the reaction NAD(+) + (deoxyribonucleotide)n-3'-hydroxyl + 5'-phospho-(deoxyribonucleotide)m = (deoxyribonucleotide)n+m + AMP + beta-nicotinamide D-nucleotide.. Its function is as follows. DNA ligase that catalyzes the formation of phosphodiester linkages between 5'-phosphoryl and 3'-hydroxyl groups in double-stranded DNA using NAD as a coenzyme and as the energy source for the reaction. It is essential for DNA replication and repair of damaged DNA. This is DNA ligase from Nitrosomonas eutropha (strain DSM 101675 / C91 / Nm57).